The primary structure comprises 405 residues: Multifunctional CCA protein (405 aa).

Glycine 8 and arginine 11 together coordinate ATP. CTP contacts are provided by glycine 8 and arginine 11. Mg(2+) contacts are provided by aspartate 21 and aspartate 23. Residues arginine 91, arginine 137, and arginine 140 each coordinate ATP. 3 residues coordinate CTP: arginine 91, arginine 137, and arginine 140. The region spanning threonine 228–tryptophan 329 is the HD domain.

Belongs to the tRNA nucleotidyltransferase/poly(A) polymerase family. Bacterial CCA-adding enzyme type 1 subfamily. In terms of assembly, monomer. Can also form homodimers and oligomers. Requires Mg(2+) as cofactor. Ni(2+) is required as a cofactor.

It catalyses the reaction a tRNA precursor + 2 CTP + ATP = a tRNA with a 3' CCA end + 3 diphosphate. The catalysed reaction is a tRNA with a 3' CCA end + 2 CTP + ATP = a tRNA with a 3' CCACCA end + 3 diphosphate. Catalyzes the addition and repair of the essential 3'-terminal CCA sequence in tRNAs without using a nucleic acid template. Adds these three nucleotides in the order of C, C, and A to the tRNA nucleotide-73, using CTP and ATP as substrates and producing inorganic pyrophosphate. tRNA 3'-terminal CCA addition is required both for tRNA processing and repair. Also involved in tRNA surveillance by mediating tandem CCA addition to generate a CCACCA at the 3' terminus of unstable tRNAs. While stable tRNAs receive only 3'-terminal CCA, unstable tRNAs are marked with CCACCA and rapidly degraded. The chain is Multifunctional CCA protein from Pseudoalteromonas atlantica (strain T6c / ATCC BAA-1087).